The primary structure comprises 150 residues: Lipoprotein signal peptidase (150 aa).

Transmembrane regions (helical) follow at residues phenylalanine 58–threonine 78 and serine 85–valine 107. Active-site residues include aspartate 108 and aspartate 122. Residues valine 117–leucine 137 form a helical membrane-spanning segment.

The protein belongs to the peptidase A8 family.

It is found in the cell membrane. It carries out the reaction Release of signal peptides from bacterial membrane prolipoproteins. Hydrolyzes -Xaa-Yaa-Zaa-|-(S,diacylglyceryl)Cys-, in which Xaa is hydrophobic (preferably Leu), and Yaa (Ala or Ser) and Zaa (Gly or Ala) have small, neutral side chains.. It functions in the pathway protein modification; lipoprotein biosynthesis (signal peptide cleavage). This protein specifically catalyzes the removal of signal peptides from prolipoproteins. This is Lipoprotein signal peptidase from Caldicellulosiruptor bescii (strain ATCC BAA-1888 / DSM 6725 / KCTC 15123 / Z-1320) (Anaerocellum thermophilum).